The following is a 240-amino-acid chain: 5-oxoprolinase subunit B (240 aa).

194-201 (GWQLIGKT) contributes to the ATP binding site.

It belongs to the PxpB family. In terms of assembly, forms a complex composed of PxpA, PxpB and PxpC. Interacts with PxpC (KipA). Interaction with PxpC prevents the inhibitory action of PxpB (KipI). Interacts with KinA. Two PxpB monomers bind via their C-domains at a conserved proline in the KinA dimerization and histidine-phosphotransfer (DHp) domain.

The catalysed reaction is 5-oxo-L-proline + ATP + 2 H2O = L-glutamate + ADP + phosphate + H(+). Catalyzes the cleavage of 5-oxoproline to form L-glutamate coupled to the hydrolysis of ATP to ADP and inorganic phosphate. In addition, is a potent inhibitor of the autophosphorylation reaction of kinase A (kinA) and its reverse reaction, but does not inhibit phosphate transfer to the Spo0F response regulator once kinase A is phosphorylated. Is an inhibitor of the catalytic domain of kinase A affecting the ATP/ADP reactions and not the phosphotransferase functions of this domain. The inhibition is non-competitive with respect to ATP. The protein is 5-oxoprolinase subunit B of Bacillus subtilis (strain 168).